A 700-amino-acid chain; its full sequence is Long chain acyl-CoA synthetase 7, peroxisomal (700 aa).

Residues 1–29 (MEFASPEQRRLETIRSHIDTSPTNDQSSS) form a disordered region. Residues 7–18 (EQRRLETIRSHI) show a composition bias toward basic and acidic residues. The short motif at 10 to 18 (RLETIRSHI) is the Microbody targeting signal element. The segment covering 19–29 (DTSPTNDQSSS) has biased composition (polar residues). Position 266-277 (266-277 (ICYTSGTTGTPK)) interacts with ATP. Residues 526–550 (DGWLHTGDIGLWLPGGRLKIIDRKK) are fatty acid-binding. The Microbody targeting signal signature appears at 698 to 700 (SKL).

Belongs to the ATP-dependent AMP-binding enzyme family. Interacts with PEX5. Requires Mg(2+) as cofactor. As to expression, expressed in roots, stems, leaves flowers and germinating seedling. Preferentially expressed in seeds.

Its subcellular location is the peroxisome. The enzyme catalyses a long-chain fatty acid + ATP + CoA = a long-chain fatty acyl-CoA + AMP + diphosphate. It catalyses the reaction decanoate + ATP + CoA = decanoyl-CoA + AMP + diphosphate. It carries out the reaction dodecanoate + ATP + CoA = dodecanoyl-CoA + AMP + diphosphate. The catalysed reaction is tetradecanoate + ATP + CoA = tetradecanoyl-CoA + AMP + diphosphate. The enzyme catalyses hexadecanoate + ATP + CoA = hexadecanoyl-CoA + AMP + diphosphate. It catalyses the reaction (9Z)-octadecenoate + ATP + CoA = (9Z)-octadecenoyl-CoA + AMP + diphosphate. It carries out the reaction (9Z,12Z)-octadecadienoate + ATP + CoA = (9Z,12Z)-octadecadienoyl-CoA + AMP + diphosphate. The catalysed reaction is (9Z,12Z,15Z)-octadecatrienoate + ATP + CoA = (9Z,12Z,15Z)-octadecatrienoyl-CoA + AMP + diphosphate. It functions in the pathway lipid metabolism; fatty acid metabolism. Its function is as follows. Activation of long-chain fatty acids for both synthesis of cellular lipids, and degradation via beta-oxidation. Preferentially uses palmitate, palmitoleate, oleate, linoleate and eicosenoate as substrates. Can use myristate and linolenate as substrates. Functions redundantly with LACS6 in lipid mobilization for beta-oxidation during seed germination, which is essential for postgerminative growth and seedling establishment. In Arabidopsis thaliana (Mouse-ear cress), this protein is Long chain acyl-CoA synthetase 7, peroxisomal.